We begin with the raw amino-acid sequence, 1172 residues long: MYEYYSTGKIRSLPQQVDSNGINSKPMNSSPSTPIPNNNNNNNNNNNNNNNNNNNNNNNNNNNRNKSQQSFYLNNNNRNCGFSSPTKPQYNNNNNNNNNNNSNYNHSYGGGGGGTTSQFQQHHLHPVNRKPPKFKISYSVKNTLNNTIIPDRHCFGVNSLAYNHRKSILYSAGRDSTIKSYQIGGGDNDNDINEKNEYGFKFKKSFNDHTDWVNDLFFNDSNILVSCSSDSTIKIWNTDSERCVNSLKFHDDYVKVLAYAPKANYFASSGLDSHIKIWDLSICSISQSFSIDNNNNNNHNSSSNYNQFGDTSILKHITNNSQPTNKINNCNINVVNGNINISTNNNNNNSSSSNNNNNNNNNNNNGQTNTHENTAETSDSEGSKDDNQLSSVNKNGIRSNLSNNNFRNIDNIDEYTPPSSVLNHTPKILSSNGRNVNNRENNNNNNNNNNNNNNNNNNNNNNNNNNNNNNNNNINNNNHENNGNVDVDDEDDDDDDDDDDDDDCNKNKKKYDDNNNNNNYNNNNNKKNNSNDNNNDNNNLNKKFSPMFGSGSYLVGKSGGEGISIYSLAIAQDASFVVSGSTERAIRGWDVRSGQKIFKLKGHTDNIRSILLNDNSTRCLSASSDGTVRLWDIGEQRCIQVFDDLHTDSVWTLATNDSFSHFFSGGRDGMIFLTDLKTHQSRLVSRENEPILKILNNQDDQSIWVSTTSSTIKNYGLSNFYDKNQSIDNNTTNCGSISSEILYNNNNNNNNNNNNNNNNNNNNNNNNNNNREKLSTINEDSNGLQVDEPKIKIQGRAGIIKNQVLNNRRQVLTKDNDNNVQLWDITKGKEIESFGKVDFDKKLEEFNEVISIPKWFQVDCKTGSLFISLESPLCFSADAYQTNLGLTPTEDSLINIGESILYSLFSKWIMGYNLIQLNATTNKDNELNHSNDSVNSSLSSNTSGDNNNNNYNNYNNYNNNNNNGLQKSSSSSSIVSTNSTTPNSGRPLIEIMAKKSIFHLPSNTDVVISDETSGLVLYRSRIEEFTGREQIKIIDWLYNCLETSAIPIKRDNQKISFSVEVNEKIPQNLNAPYYIQVRKICDHVLNNFFINPNNNNNNNSSVNNDLPKGEEFFEICLQNKILLPHYTLGTVKSFFWKQNSTIPLTARVKAQYINETELVKYLKQLSLNHNKK.

The interval 1 to 115 (MYEYYSTGKI…HSYGGGGGGT (115 aa)) is disordered. Residues 13–36 (LPQQVDSNGINSKPMNSSPSTPIP) are compositionally biased toward polar residues. Residues 37–63 (NNNNNNNNNNNNNNNNNNNNNNNNNNN) are compositionally biased toward low complexity. Positions 64–89 (RNKSQQSFYLNNNNRNCGFSSPTKPQ) are enriched in polar residues. Over residues 90–107 (YNNNNNNNNNNNSNYNHS) the composition is skewed to low complexity. WD repeat units lie at residues 152 to 202 (RHCF…GFKF), 208 to 246 (DHTD…CVNS), 249 to 548 (FHDD…SPMF), 560 to 599 (GEGI…KIFK), 602 to 641 (GHTD…CIQV), 645 to 683 (LHTD…QSRL), and 686 to 727 (RENE…NQSI). Over residues 341–365 (ISTNNNNNNSSSSNNNNNNNNNNNN) the composition is skewed to low complexity. The disordered stretch occupies residues 341 to 544 (ISTNNNNNNS…NDNNNLNKKF (204 aa)). Composition is skewed to polar residues over residues 366-377 (GQTNTHENTAET), 388-408 (QLSS…NFRN), and 417-434 (PPSS…SNGR). The segment covering 435–485 (NVNNRENNNNNNNNNNNNNNNNNNNNNNNNNNNNNNNNNINNNNHENNGNV) has biased composition (low complexity). The span at 486-503 (DVDDEDDDDDDDDDDDDD) shows a compositional bias: acidic residues. The segment covering 504–513 (CNKNKKKYDD) has biased composition (basic and acidic residues). Over residues 514–543 (NNNNNNYNNNNNKKNNSNDNNNDNNNLNKK) the composition is skewed to low complexity. Residues 745 to 769 (NNNNNNNNNNNNNNNNNNNNNNNNN) are compositionally biased toward low complexity. Positions 745–775 (NNNNNNNNNNNNNNNNNNNNNNNNNNREKLS) are disordered. One copy of the WD 8 repeat lies at 794–833 (QGRAGIIKNQVLNNRRQVLTKDNDNNVQLWDITKGKEIES). The tract at residues 926–986 (ELNHSNDSVN…TNSTTPNSGR (61 aa)) is disordered. The segment covering 930 to 984 (SNDSVNSSLSSNTSGDNNNNNYNNYNNYNNNNNNGLQKSSSSSSIVSTNSTTPNS) has biased composition (low complexity).

This sequence belongs to the WD repeat WDR48 family.

This is WD repeat-containing protein 48 homolog from Dictyostelium discoideum (Social amoeba).